Consider the following 94-residue polypeptide: Putative pterin-4-alpha-carbinolamine dehydratase (94 aa).

It belongs to the pterin-4-alpha-carbinolamine dehydratase family.

The catalysed reaction is (4aS,6R)-4a-hydroxy-L-erythro-5,6,7,8-tetrahydrobiopterin = (6R)-L-erythro-6,7-dihydrobiopterin + H2O. The chain is Putative pterin-4-alpha-carbinolamine dehydratase from Mycobacterium tuberculosis (strain ATCC 25177 / H37Ra).